The chain runs to 688 residues: Sodium channel and clathrin linker 1 (688 aa).

Ala2 carries the post-translational modification N-acetylalanine. Residues Leu59–Thr673 adopt a coiled-coil conformation. Position 681 is a phosphoserine (Ser681).

Interacts with SCN10A and clathrin. Identified in a complex containing SCN10A, clathrin and SCLT1. As to expression, detected in small neurons in dorsal root ganglia. Detected in C-type fibers of sciatic nerve (at protein level).

Its subcellular location is the cytoplasm. The protein resides in the cytoskeleton. It is found in the microtubule organizing center. It localises to the centrosome. The protein localises to the centriole. In terms of biological role, adapter protein that links SCN10A to clathrin. Regulates SCN10A channel activity, possibly by promoting channel internalization. This is Sodium channel and clathrin linker 1 (Sclt1) from Rattus norvegicus (Rat).